The following is a 103-amino-acid chain: MKDSYISIVIAYLMVTFILVSSMPIEGEKRELGPHRLPCPPKLNDENYCFNGKCVHLVAQDEPGKPYYSCICDEFYIGERCGTLDLTNPGYFLKGQSSTQSSI.

An N-terminal signal peptide occupies residues 1–30 (MKDSYISIVIAYLMVTFILVSSMPIEGEKR). Cystine bridges form between Cys-39–Cys-54, Cys-49–Cys-70, and Cys-72–Cys-81. One can recognise an EGF-like domain in the interval 43-82 (LNDENYCFNGKCVHLVAQDEPGKPYYSCICDEFYIGERCG).

It belongs to the EGF domain peptide family. Expressed by the venom gland.

It localises to the secreted. Ant peptide with probable defensive activity which acts as a potent agonist of the mammalian epidermal growth factor receptor (EGFR). Mimics, both structurally and functionally, vertebrate epidermal growth factor (EGF) peptide hormones. In vivo, intraplantar injection in mice causes long-lasting (several days) hypersensitivity of the injected paw to both mechanical and thermal stimuli. Its long-lasting effect is unusual for venom toxins whose effects are usually immediate. One possible explanation is that it would reduce the duration of a nest attack, discourage future attacks, or enhance the actions of subsequent exposure to other pain-inducing venom peptides. The sequence is that of OMEGA-ectatommitoxin(02)-Rm1d from Rhytidoponera metallica (Australian green-headed ant).